We begin with the raw amino-acid sequence, 337 residues long: Holliday junction branch migration complex subunit RuvB (337 aa).

Residues 4 to 184 (ADRLIAPAAI…FGIVQRLEFY (181 aa)) are large ATPase domain (RuvB-L). Residues Ile-23, Arg-24, Gly-65, Lys-68, Thr-69, Thr-70, 131–133 (EDY), Arg-174, Tyr-184, and Arg-221 contribute to the ATP site. A Mg(2+)-binding site is contributed by Thr-69. The segment at 185–255 (KVEDLAHIVG…IAAQALDMLD (71 aa)) is small ATPAse domain (RuvB-S). The interval 258–337 (NAGFDYMDRK…FGLTTPERQG (80 aa)) is head domain (RuvB-H). 2 residues coordinate DNA: Arg-313 and Arg-318.

It belongs to the RuvB family. In terms of assembly, homohexamer. Forms an RuvA(8)-RuvB(12)-Holliday junction (HJ) complex. HJ DNA is sandwiched between 2 RuvA tetramers; dsDNA enters through RuvA and exits via RuvB. An RuvB hexamer assembles on each DNA strand where it exits the tetramer. Each RuvB hexamer is contacted by two RuvA subunits (via domain III) on 2 adjacent RuvB subunits; this complex drives branch migration. In the full resolvosome a probable DNA-RuvA(4)-RuvB(12)-RuvC(2) complex forms which resolves the HJ.

It localises to the cytoplasm. It carries out the reaction ATP + H2O = ADP + phosphate + H(+). Functionally, the RuvA-RuvB-RuvC complex processes Holliday junction (HJ) DNA during genetic recombination and DNA repair, while the RuvA-RuvB complex plays an important role in the rescue of blocked DNA replication forks via replication fork reversal (RFR). RuvA specifically binds to HJ cruciform DNA, conferring on it an open structure. The RuvB hexamer acts as an ATP-dependent pump, pulling dsDNA into and through the RuvAB complex. RuvB forms 2 homohexamers on either side of HJ DNA bound by 1 or 2 RuvA tetramers; 4 subunits per hexamer contact DNA at a time. Coordinated motions by a converter formed by DNA-disengaged RuvB subunits stimulates ATP hydrolysis and nucleotide exchange. Immobilization of the converter enables RuvB to convert the ATP-contained energy into a lever motion, pulling 2 nucleotides of DNA out of the RuvA tetramer per ATP hydrolyzed, thus driving DNA branch migration. The RuvB motors rotate together with the DNA substrate, which together with the progressing nucleotide cycle form the mechanistic basis for DNA recombination by continuous HJ branch migration. Branch migration allows RuvC to scan DNA until it finds its consensus sequence, where it cleaves and resolves cruciform DNA. This is Holliday junction branch migration complex subunit RuvB from Tolumonas auensis (strain DSM 9187 / NBRC 110442 / TA 4).